The sequence spans 1214 residues: BOS complex subunit NOMO1 (1214 aa).

Positions 1-23 (MRAGRCAAALLLLLLSGAGRAIG) are cleaved as a signal peptide. At 24 to 1150 (SEDIVVGCGG…RKLPEQDIAQ (1127 aa)) the chain is on the extracellular side. Residues N42, N210, and N610 are each glycosylated (N-linked (GlcNAc...) asparagine). The stretch at 692 to 720 (KSAQELRREQQLAEIETRRQEREKNGKEE) forms a coiled coil. Over residues 708–726 (TRRQEREKNGKEEGEEGRA) the composition is skewed to basic and acidic residues. The interval 708-733 (TRRQEREKNGKEEGEEGRARPPGQEM) is disordered. A helical transmembrane segment spans residues 1151-1167 (GSYIALPLTLLLLLAGY). At 1168–1214 (NHDKLIPLLLQLTSRLQGVRALGQAASDSSGPEDMKRQTKKQKTRRT) the chain is on the cytoplasmic side. The disordered stretch occupies residues 1190–1214 (GQAASDSSGPEDMKRQTKKQKTRRT). Phosphoserine is present on residues S1196 and S1197. Positions 1205–1214 (QTKKQKTRRT) are enriched in basic residues.

In terms of assembly, component of the back of Sec61 (BOS) complex, composed of NCLN/Nicalin, NOMO (NOMO1, NOMO2 or NOMO3) and TMEM147. The BOS complex is part of the multi-pass translocon (MPT) complex, composed of three subcomplexes, the GEL complex (composed of RAB5IF/OPTI and TMCO1), the BOS complex (composed of NCLN/Nicalin, NOMO and TMEM147) and the PAT complex (composed of WDR83OS/Asterix and CCDC47). The MPT complex associates with the SEC61 complex.

It is found in the endoplasmic reticulum membrane. Functionally, component of the multi-pass translocon (MPT) complex that mediates insertion of multi-pass membrane proteins into the lipid bilayer of membranes. The MPT complex takes over after the SEC61 complex: following membrane insertion of the first few transmembrane segments of proteins by the SEC61 complex, the MPT complex occludes the lateral gate of the SEC61 complex to promote insertion of subsequent transmembrane regions. The sequence is that of BOS complex subunit NOMO1 from Mus musculus (Mouse).